The primary structure comprises 219 residues: Lipid transferase CIDEB (219 aa).

Thr18 bears the Phosphothreonine mark. One can recognise a CIDE-N domain in the interval 34 to 110 (PQRPFRVCDH…VLEQGQSWSP (77 aa)).

The protein belongs to the CIDE family. Interacts with DFFA. Interacts with DFFB; inhibited by DFFB. Interacts with APOB. Interacts with PREB/SEC12; facilitating loading of SCAP-SREBP into COPII vesicles. In terms of tissue distribution, highly enriched in the liver.

The protein localises to the lipid droplet. Its subcellular location is the endoplasmic reticulum membrane. The protein resides in the golgi apparatus. It is found in the cytoplasmic vesicle. It localises to the COPI-coated vesicle. Functionally, lipid transferase specifically expressed in hepatocytes, which promotes unilocular lipid droplet formation by mediating lipid droplet fusion. Lipid droplet fusion promotes their enlargement, restricting lipolysis and favoring lipid storage. Localizes on the lipid droplet surface, at focal contact sites between lipid droplets, and mediates atypical lipid droplet fusion by promoting directional net neutral lipid transfer from the smaller to larger lipid droplets. The transfer direction may be driven by the internal pressure difference between the contacting lipid droplet pair. Promotes lipid exchange and lipid droplet fusion in both small and large lipid droplet-containing hepatocytes. In addition to its role in lipid droplet fusion, also involved in cytoplasmic vesicle biogenesis and transport. Required for very-low-density lipoprotein (VLDL) lipidation and maturation. Probably involved in the biogenesis of VLDL transport vesicles by forming a COPII vesicle coat and facilitating the formation of endoplasmic reticulum-derived large vesicles. Also involved in sterol-regulated export of the SCAP-SREBP complex, composed of SCAP, SREBF1/SREBP1 and SREBF2/SREBP2, by promoting loading of SCAP-SREBP into COPII vesicles. May also activate apoptosis. The protein is Lipid transferase CIDEB of Mus musculus (Mouse).